Here is a 344-residue protein sequence, read N- to C-terminus: DNA-directed RNA polymerase subunit alpha (344 aa).

Positions 1 to 238 (MKVIKTAPLI…KQLGVFGERP (238 aa)) are alpha N-terminal domain (alpha-NTD). The interval 254 to 344 (AKDLSAKIES…EKLEDKGGND (91 aa)) is alpha C-terminal domain (alpha-CTD).

Belongs to the RNA polymerase alpha chain family. As to quaternary structure, homodimer. The RNAP catalytic core consists of 2 alpha, 1 beta, 1 beta' and 1 omega subunit. When a sigma factor is associated with the core the holoenzyme is formed, which can initiate transcription.

The enzyme catalyses RNA(n) + a ribonucleoside 5'-triphosphate = RNA(n+1) + diphosphate. DNA-dependent RNA polymerase catalyzes the transcription of DNA into RNA using the four ribonucleoside triphosphates as substrates. This is DNA-directed RNA polymerase subunit alpha from Helicobacter pylori (strain J99 / ATCC 700824) (Campylobacter pylori J99).